We begin with the raw amino-acid sequence, 599 residues long: Aspartate--tRNA(Asp/Asn) ligase (599 aa).

Position 183 (Glu183) interacts with L-aspartate. Residues Gln207–Lys210 are aspartate. Arg229 contributes to the L-aspartate binding site. ATP is bound by residues Arg229–Glu231 and Gln238. His456 is an L-aspartate binding site. Glu490 lines the ATP pocket. Position 497 (Arg497) interacts with L-aspartate. Gly542–Arg545 contacts ATP.

It belongs to the class-II aminoacyl-tRNA synthetase family. Type 1 subfamily. In terms of assembly, homodimer.

The protein resides in the cytoplasm. It carries out the reaction tRNA(Asx) + L-aspartate + ATP = L-aspartyl-tRNA(Asx) + AMP + diphosphate. Its function is as follows. Aspartyl-tRNA synthetase with relaxed tRNA specificity since it is able to aspartylate not only its cognate tRNA(Asp) but also tRNA(Asn). Reaction proceeds in two steps: L-aspartate is first activated by ATP to form Asp-AMP and then transferred to the acceptor end of tRNA(Asp/Asn). This chain is Aspartate--tRNA(Asp/Asn) ligase, found in Protochlamydia amoebophila (strain UWE25).